The following is a 108-amino-acid chain: Synaptic plasticity regulator PANTS (108 aa).

The tract at residues 58–108 (KNHSTQAKDSLQESERKRLADQRKFTPVWELRQKPPSDWHLPLNQGEPQDP) is disordered. A compositionally biased stretch (basic and acidic residues) spans 67–81 (SLQESERKRLADQRK).

This sequence belongs to the UPF0545 family. Post-translationally, rapidly degraded by proteolysis following neuronal stimulation, resulting in increased AMPA receptor clustering.

It is found in the synapse. It localises to the synaptic cleft. In terms of biological role, negatively regulates long-term potentiation and modulates adult synaptic plasticity. In Danio rerio (Zebrafish), this protein is Synaptic plasticity regulator PANTS.